Consider the following 360-residue polypeptide: Phosphoserine aminotransferase (360 aa).

Arg41 contacts L-glutamate. Pyridoxal 5'-phosphate is bound by residues 75–76 (AS), Trp101, Thr151, Asp171, and Gln194. Lys195 carries the post-translational modification N6-(pyridoxal phosphate)lysine. Pyridoxal 5'-phosphate is bound at residue 236–237 (NT).

This sequence belongs to the class-V pyridoxal-phosphate-dependent aminotransferase family. SerC subfamily. Homodimer. Pyridoxal 5'-phosphate is required as a cofactor.

It is found in the cytoplasm. The enzyme catalyses O-phospho-L-serine + 2-oxoglutarate = 3-phosphooxypyruvate + L-glutamate. The catalysed reaction is 4-(phosphooxy)-L-threonine + 2-oxoglutarate = (R)-3-hydroxy-2-oxo-4-phosphooxybutanoate + L-glutamate. It functions in the pathway amino-acid biosynthesis; L-serine biosynthesis; L-serine from 3-phospho-D-glycerate: step 2/3. Its pathway is cofactor biosynthesis; pyridoxine 5'-phosphate biosynthesis; pyridoxine 5'-phosphate from D-erythrose 4-phosphate: step 3/5. In terms of biological role, catalyzes the reversible conversion of 3-phosphohydroxypyruvate to phosphoserine and of 3-hydroxy-2-oxo-4-phosphonooxybutanoate to phosphohydroxythreonine. This is Phosphoserine aminotransferase from Herpetosiphon aurantiacus (strain ATCC 23779 / DSM 785 / 114-95).